The chain runs to 141 residues: Nucleoside diphosphate kinase (141 aa).

Lys11, Phe59, Arg87, Thr93, Arg104, and Asn114 together coordinate ATP. Catalysis depends on His117, which acts as the Pros-phosphohistidine intermediate.

It belongs to the NDK family. Homotetramer. The cofactor is Mg(2+).

The protein resides in the cytoplasm. It carries out the reaction a 2'-deoxyribonucleoside 5'-diphosphate + ATP = a 2'-deoxyribonucleoside 5'-triphosphate + ADP. It catalyses the reaction a ribonucleoside 5'-diphosphate + ATP = a ribonucleoside 5'-triphosphate + ADP. Major role in the synthesis of nucleoside triphosphates other than ATP. The ATP gamma phosphate is transferred to the NDP beta phosphate via a ping-pong mechanism, using a phosphorylated active-site intermediate. The polypeptide is Nucleoside diphosphate kinase (Legionella pneumophila (strain Lens)).